The following is a 151-amino-acid chain: 3-hydroxyacyl-thioester dehydratase Z (151 aa).

The MaoC-like domain occupies 11 to 131 (AAAAGEKVGQ…TVQATVSTTV (121 aa)). Substrate is bound by residues 60–63 (IAHG), 86–89 (AINY), 97–99 (PAP), Gln-124, and Arg-148.

Belongs to the enoyl-CoA hydratase/isomerase family. In terms of assembly, homodimer.

It catalyses the reaction a (3R)-3-hydroxyacyl-CoA = a (2E)-enoyl-CoA + H2O. Its function is as follows. Shows trans-enoyl-CoA hydratase/3-hydroxyacyl-CoA dehydratase activity. This is 3-hydroxyacyl-thioester dehydratase Z from Mycobacterium bovis (strain ATCC BAA-935 / AF2122/97).